A 220-amino-acid polypeptide reads, in one-letter code: 5'(3')-deoxyribonucleotidase, mitochondrial (220 aa).

The transit peptide at 1-23 (MHRLRGCCARPRGAPLRAERSRA) directs the protein to the mitochondrion. Asp33 functions as the Nucleophile in the catalytic mechanism. The Mg(2+) site is built by Asp33 and Asp35. The Proton donor role is filled by Asp35. Substrate is bound by residues Asp35, Phe41, Phe67, Trp68, Val69, Trp88, Thr122, and Lys157. Asp168 serves as a coordination point for Mg(2+).

It belongs to the 5'(3')-deoxyribonucleotidase family. Homodimer. Mg(2+) serves as cofactor.

The protein resides in the mitochondrion. Its function is as follows. Dephosphorylates specifically the 5' and 2'(3')-phosphates of uracil and thymine deoxyribonucleotides, and so protects mitochondrial DNA replication from excess dTTP. Has only marginal activity towards dIMP and dGMP. The protein is 5'(3')-deoxyribonucleotidase, mitochondrial (Nt5m) of Mus musculus (Mouse).